The following is a 133-amino-acid chain: UPF0047 protein Rv2556c (133 aa).

The protein belongs to the UPF0047 family.

The polypeptide is UPF0047 protein Rv2556c (Mycobacterium tuberculosis (strain ATCC 25618 / H37Rv)).